The chain runs to 476 residues: Bifunctional protein HldE (476 aa).

A ribokinase region spans residues 1-319 (MKVSLPAFEK…EALALHHGES (319 aa)). 195–198 (NMSE) is an ATP binding site. D264 is a catalytic residue. The segment at 345–476 (MTNGCFDILH…AIIQNIMANQ (132 aa)) is cytidylyltransferase.

In the N-terminal section; belongs to the carbohydrate kinase PfkB family. It in the C-terminal section; belongs to the cytidylyltransferase family. In terms of assembly, homodimer.

The catalysed reaction is D-glycero-beta-D-manno-heptose 7-phosphate + ATP = D-glycero-beta-D-manno-heptose 1,7-bisphosphate + ADP + H(+). It catalyses the reaction D-glycero-beta-D-manno-heptose 1-phosphate + ATP + H(+) = ADP-D-glycero-beta-D-manno-heptose + diphosphate. It functions in the pathway nucleotide-sugar biosynthesis; ADP-L-glycero-beta-D-manno-heptose biosynthesis; ADP-L-glycero-beta-D-manno-heptose from D-glycero-beta-D-manno-heptose 7-phosphate: step 1/4. The protein operates within nucleotide-sugar biosynthesis; ADP-L-glycero-beta-D-manno-heptose biosynthesis; ADP-L-glycero-beta-D-manno-heptose from D-glycero-beta-D-manno-heptose 7-phosphate: step 3/4. Catalyzes the phosphorylation of D-glycero-D-manno-heptose 7-phosphate at the C-1 position to selectively form D-glycero-beta-D-manno-heptose-1,7-bisphosphate. Functionally, catalyzes the ADP transfer from ATP to D-glycero-beta-D-manno-heptose 1-phosphate, yielding ADP-D-glycero-beta-D-manno-heptose. This chain is Bifunctional protein HldE, found in Shewanella sp. (strain W3-18-1).